Reading from the N-terminus, the 419-residue chain is Gamma-glutamyl phosphate reductase (419 aa).

The protein belongs to the gamma-glutamyl phosphate reductase family.

It localises to the cytoplasm. The enzyme catalyses L-glutamate 5-semialdehyde + phosphate + NADP(+) = L-glutamyl 5-phosphate + NADPH + H(+). It participates in amino-acid biosynthesis; L-proline biosynthesis; L-glutamate 5-semialdehyde from L-glutamate: step 2/2. Its function is as follows. Catalyzes the NADPH-dependent reduction of L-glutamate 5-phosphate into L-glutamate 5-semialdehyde and phosphate. The product spontaneously undergoes cyclization to form 1-pyrroline-5-carboxylate. The polypeptide is Gamma-glutamyl phosphate reductase (Nitratidesulfovibrio vulgaris (strain ATCC 29579 / DSM 644 / CCUG 34227 / NCIMB 8303 / VKM B-1760 / Hildenborough) (Desulfovibrio vulgaris)).